The following is a 500-amino-acid chain: E3 ubiquitin-protein ligase TRIM4 (500 aa).

The segment at 12–53 adopts an RING-type zinc-finger fold; that stretch reads CPICLDYFQDPVSIECGHNFCRGCLHRNWAPGGGPFPCPECR. The segment at 82 to 123 adopts a B box-type zinc-finger fold; it reads VPPGLCGRHWEPLRLFCEDDQRPVCLVCRESQEHQTHAMAPI. Zn(2+) contacts are provided by Cys87, His90, Cys109, and His115. A coiled-coil region spans residues 212 to 253; the sequence is EEEDLFLQRLNKEEEETKKKLNENTLKLNQTIASLKKLILEV. Positions 288-500 constitute a B30.2/SPRY domain; that stretch reads KVKTVCQIPL…LVIPPVTDRK (213 aa).

Belongs to the TRIM/RBCC family. As to quaternary structure, homotrimer.

The protein resides in the cytoplasm. It catalyses the reaction S-ubiquitinyl-[E2 ubiquitin-conjugating enzyme]-L-cysteine + [acceptor protein]-L-lysine = [E2 ubiquitin-conjugating enzyme]-L-cysteine + N(6)-ubiquitinyl-[acceptor protein]-L-lysine.. It participates in protein modification; protein ubiquitination. Its function is as follows. E3 ubiquitin-protein ligase. Mediates 'Lys-63'-linked polyubiquitination of the innate immune receptor RIGI, this linkage doesn't lead to proteasomal degradation but seems to enhance IFN induction. The polypeptide is E3 ubiquitin-protein ligase TRIM4 (TRIM4) (Homo sapiens (Human)).